The following is a 267-amino-acid chain: Diphthine synthase (267 aa).

Residues Leu-9, Asp-87, Ile-90, Ser-115–Ile-116, Leu-166, Leu-205, and His-230 each bind S-adenosyl-L-methionine.

The protein belongs to the diphthine synthase family. In terms of assembly, homodimer.

The catalysed reaction is 2-[(3S)-amino-3-carboxypropyl]-L-histidyl-[translation elongation factor 2] + 3 S-adenosyl-L-methionine = diphthine-[translation elongation factor 2] + 3 S-adenosyl-L-homocysteine + 3 H(+). The protein operates within protein modification; peptidyl-diphthamide biosynthesis. Its function is as follows. S-adenosyl-L-methionine-dependent methyltransferase that catalyzes the trimethylation of the amino group of the modified target histidine residue in translation elongation factor 2 (EF-2), to form an intermediate called diphthine. The three successive methylation reactions represent the second step of diphthamide biosynthesis. This chain is Diphthine synthase, found in Staphylothermus marinus (strain ATCC 43588 / DSM 3639 / JCM 9404 / F1).